The primary structure comprises 250 residues: Probable transcriptional regulatory protein ckrop_1032 (250 aa).

The segment at 1–22 (MSGHSKWATTKHKKAANDAKRG) is disordered.

Belongs to the TACO1 family.

It is found in the cytoplasm. This chain is Probable transcriptional regulatory protein ckrop_1032, found in Corynebacterium kroppenstedtii (strain DSM 44385 / JCM 11950 / CIP 105744 / CCUG 35717).